The chain runs to 195 residues: Rubrerythrin (195 aa).

Positions 1–150 (MKSLKGTKTA…KLAKNIEEGK (150 aa)) constitute a Ferritin-like diiron domain. Residues Glu-20, Glu-53, Glu-98, Glu-101, Glu-132, His-135, Cys-162, Cys-165, Cys-178, and Cys-181 each coordinate Fe(3+). In terms of domain architecture, Rubredoxin-like spans 157-195 (VVLWKCGNCGFIWEGAEAPLKCPACLHPQAYFEVFKETY).

As to quaternary structure, homodimer. Possesses two rubredoxin-like centers and two non-sulfur oxo-bridged di-iron centers per dimer. It depends on Fe(3+) as a cofactor.

It is found in the cytoplasm. Its function is as follows. May provide oxidative stress protection via catalytic reduction of intracellular hydrogen peroxide. This chain is Rubrerythrin (rbr), found in Clostridium perfringens (strain 13 / Type A).